The sequence spans 298 residues: 5,10-methylenetetrahydrofolate reductase (298 aa).

Residue Glu28 is the Proton donor/acceptor of the active site. Thr59 serves as a coordination point for NADH. The FAD site is built by Tyr60, Ala62, His88, Arg118, Gly119, Asp120, Ala132, Tyr152, His156, Ala159, Asp165, Asn168, and Lys172. A (6S)-5-methyl-5,6,7,8-tetrahydrofolate-binding site is contributed by Asp120. Residue Gln183 coordinates NADH. Residues Gln183, Gln219, and Arg279 each coordinate (6S)-5-methyl-5,6,7,8-tetrahydrofolate.

This sequence belongs to the methylenetetrahydrofolate reductase family. Requires FAD as cofactor.

The enzyme catalyses (6S)-5-methyl-5,6,7,8-tetrahydrofolate + NAD(+) = (6R)-5,10-methylene-5,6,7,8-tetrahydrofolate + NADH + H(+). Its pathway is one-carbon metabolism; tetrahydrofolate interconversion. It functions in the pathway amino-acid biosynthesis; L-methionine biosynthesis via de novo pathway. Its function is as follows. Catalyzes the NADH-dependent reduction of 5,10-methylenetetrahydrofolate to 5-methyltetrahydrofolate. Is required to provide the methyl group necessary for methionine synthetase to convert homocysteine to methionine; the methyl group is given by 5-methyltetrahydrofolate. The chain is 5,10-methylenetetrahydrofolate reductase (metF) from Pectobacterium carotovorum subsp. carotovorum (Erwinia carotovora subsp. carotovora).